The chain runs to 161 residues: Regulator of ribonuclease activity A (161 aa).

Belongs to the RraA family. Homotrimer. Binds to both RNA-binding sites in the C-terminal region of Rne and to RhlB.

It localises to the cytoplasm. Functionally, globally modulates RNA abundance by binding to RNase E (Rne) and regulating its endonucleolytic activity. Can modulate Rne action in a substrate-dependent manner by altering the composition of the degradosome. Modulates RNA-binding and helicase activities of the degradosome. This is Regulator of ribonuclease activity A from Alteromonas mediterranea (strain DSM 17117 / CIP 110805 / LMG 28347 / Deep ecotype).